We begin with the raw amino-acid sequence, 115 residues long: Nitrogenase-stabilizing/protective protein NifW (115 aa).

This sequence belongs to the NifW family. Homotrimer; associates with NifD.

Functionally, may protect the nitrogenase Fe-Mo protein from oxidative damage. The polypeptide is Nitrogenase-stabilizing/protective protein NifW (Rhodopseudomonas palustris (strain BisB18)).